Reading from the N-terminus, the 319-residue chain is ATP-dependent 6-phosphofructokinase (319 aa).

ATP contacts are provided by residues Gly11, 72-73, and 102-105; these read RS and GDGS. Asp103 is a binding site for Mg(2+). Substrate is bound at residue 126–128; sequence TID. Asp128 serves as the catalytic Proton acceptor. Arg155 serves as a coordination point for ADP. Residues Arg163 and 170–172 contribute to the substrate site; that span reads MGR. Residue 186 to 188 participates in ADP binding; sequence GAE. Substrate is bound by residues Glu223, Arg245, and 251 to 254; that span reads HTQR.

It belongs to the phosphofructokinase type A (PFKA) family. ATP-dependent PFK group I subfamily. Prokaryotic clade 'B1' sub-subfamily. Homotetramer. The cofactor is Mg(2+).

The protein resides in the cytoplasm. It carries out the reaction beta-D-fructose 6-phosphate + ATP = beta-D-fructose 1,6-bisphosphate + ADP + H(+). The protein operates within carbohydrate degradation; glycolysis; D-glyceraldehyde 3-phosphate and glycerone phosphate from D-glucose: step 3/4. Allosterically activated by ADP and other diphosphonucleosides, and allosterically inhibited by phosphoenolpyruvate. Its function is as follows. Catalyzes the phosphorylation of D-fructose 6-phosphate to fructose 1,6-bisphosphate by ATP, the first committing step of glycolysis. This Sulfurimonas denitrificans (strain ATCC 33889 / DSM 1251) (Thiomicrospira denitrificans (strain ATCC 33889 / DSM 1251)) protein is ATP-dependent 6-phosphofructokinase.